The sequence spans 370 residues: Type II restriction enzyme MjaII (370 aa).

The protein belongs to the TdeIII type II restriction endonuclease family.

It carries out the reaction Endonucleolytic cleavage of DNA to give specific double-stranded fragments with terminal 5'-phosphates.. Its function is as follows. A P subtype restriction enzyme that recognizes the double-stranded sequence 5'-GGNCC-3'; the cleavage site is unknown. The polypeptide is Type II restriction enzyme MjaII (mjaIIR) (Methanocaldococcus jannaschii (strain ATCC 43067 / DSM 2661 / JAL-1 / JCM 10045 / NBRC 100440) (Methanococcus jannaschii)).